A 127-amino-acid chain; its full sequence is Large ribosomal subunit protein bL12 (127 aa).

This sequence belongs to the bacterial ribosomal protein bL12 family. In terms of assembly, homodimer. Part of the ribosomal stalk of the 50S ribosomal subunit. Forms a multimeric L10(L12)X complex, where L10 forms an elongated spine to which 2 to 4 L12 dimers bind in a sequential fashion. Binds GTP-bound translation factors.

In terms of biological role, forms part of the ribosomal stalk which helps the ribosome interact with GTP-bound translation factors. Is thus essential for accurate translation. The polypeptide is Large ribosomal subunit protein bL12 (Pelobacter propionicus (strain DSM 2379 / NBRC 103807 / OttBd1)).